We begin with the raw amino-acid sequence, 599 residues long: Sulfite reductase [NADPH] flavoprotein alpha-component (599 aa).

In terms of domain architecture, Flavodoxin-like spans Ile-64–Val-202. FMN contacts are provided by residues Ser-70–Ala-75, Ser-117–Gly-120, and Leu-153–Cys-162. The FAD-binding FR-type domain maps to Asp-234–Pro-448. Residues Thr-322, Ala-356, Arg-386–Ser-389, Thr-404–Gly-406, Tyr-410, and Gly-419–Ser-422 contribute to the FAD site. Residues Ser-519–Arg-520, Lys-525–Gln-529, and Asp-561 each bind NADP(+). FAD is bound at residue Tyr-599.

It belongs to the NADPH-dependent sulphite reductase flavoprotein subunit CysJ family. This sequence in the N-terminal section; belongs to the flavodoxin family. The protein in the C-terminal section; belongs to the flavoprotein pyridine nucleotide cytochrome reductase family. In terms of assembly, alpha(8)-beta(8). The alpha component is a flavoprotein, the beta component is a hemoprotein. FAD serves as cofactor. Requires FMN as cofactor.

It carries out the reaction hydrogen sulfide + 3 NADP(+) + 3 H2O = sulfite + 3 NADPH + 4 H(+). It participates in sulfur metabolism; hydrogen sulfide biosynthesis; hydrogen sulfide from sulfite (NADPH route): step 1/1. Component of the sulfite reductase complex that catalyzes the 6-electron reduction of sulfite to sulfide. This is one of several activities required for the biosynthesis of L-cysteine from sulfate. The flavoprotein component catalyzes the electron flow from NADPH -&gt; FAD -&gt; FMN to the hemoprotein component. The chain is Sulfite reductase [NADPH] flavoprotein alpha-component from Shigella boydii serotype 4 (strain Sb227).